Here is a 544-residue protein sequence, read N- to C-terminus: Ell-associated factor Eaf (544 aa).

Positions 147-544 are disordered; sequence QSVPMNMGHQ…LSSNSSDDDD (398 aa). Residues 193–202 are compositionally biased toward basic and acidic residues; the sequence is SSKDKVDFKP. Phosphoserine is present on Ser205. Residues 264–273 show a composition bias toward low complexity; the sequence is SGSSTGSSSG. Positions 287–299 are enriched in basic residues; sequence GKQRQAHGKRQQI. Low complexity-rich tracts occupy residues 305 to 319, 333 to 374, and 396 to 407; these read PPVQQQPHYQQQQQP, QPHP…QQRP, and ASQSVAQAAAVL. Over residues 425–440 the composition is skewed to acidic residues; sequence DSSDSDSGSDSDDSTE. Composition is skewed to low complexity over residues 450–483, 503–513, and 526–544; these read EQQQQQQLQHQQIQQPAPHHQRHQQQQSQQHMNQ, QQPQPQPQQQQ, and NDLLQNDLQLSSNSSDDDD.

It belongs to the EAF family.

It is found in the nucleus. Functionally, promotes transcriptional elongation by Su(Tpl)/ELL. Essential for development. In Drosophila persimilis (Fruit fly), this protein is Ell-associated factor Eaf.